The following is a 264-amino-acid chain: Thymidylate synthase (264 aa).

A dUMP-binding site is contributed by arginine 21. Residue histidine 51 participates in (6R)-5,10-methylene-5,6,7,8-tetrahydrofolate binding. Residue 126-127 participates in dUMP binding; the sequence is RR. Cysteine 146 serves as the catalytic Nucleophile. DUMP-binding positions include 166–169, asparagine 177, and 207–209; these read RSAD and HLY. Aspartate 169 contacts (6R)-5,10-methylene-5,6,7,8-tetrahydrofolate. Serine 263 provides a ligand contact to (6R)-5,10-methylene-5,6,7,8-tetrahydrofolate.

The protein belongs to the thymidylate synthase family. Bacterial-type ThyA subfamily. Homodimer.

The protein localises to the cytoplasm. It catalyses the reaction dUMP + (6R)-5,10-methylene-5,6,7,8-tetrahydrofolate = 7,8-dihydrofolate + dTMP. It functions in the pathway pyrimidine metabolism; dTTP biosynthesis. Catalyzes the reductive methylation of 2'-deoxyuridine-5'-monophosphate (dUMP) to 2'-deoxythymidine-5'-monophosphate (dTMP) while utilizing 5,10-methylenetetrahydrofolate (mTHF) as the methyl donor and reductant in the reaction, yielding dihydrofolate (DHF) as a by-product. This enzymatic reaction provides an intracellular de novo source of dTMP, an essential precursor for DNA biosynthesis. The chain is Thymidylate synthase from Nitrosococcus oceani (strain ATCC 19707 / BCRC 17464 / JCM 30415 / NCIMB 11848 / C-107).